A 231-amino-acid chain; its full sequence is Cysteine-rich venom protein VAR10 (231 aa).

The signal sequence occupies residues 1-19 (MILLKLYLTLAAILCQSRG). In terms of domain architecture, SCP spans 41–169 (NKHNDLRRTV…SLKYFQVCQY (129 aa)). Intrachain disulfides connect Cys77/Cys156, Cys95/Cys170, Cys151/Cys167, Cys189/Cys196, and Cys214/Cys231. In terms of domain architecture, ShKT spans 205–231 (CAYNDDYTSCPDLTKQVGCHHPVTANC).

Belongs to the CRISP family. In terms of processing, contains 8 disulfide bonds. As to expression, expressed by the venom gland.

The protein resides in the secreted. In terms of biological role, blocks ryanodine receptors, and potassium channels. The polypeptide is Cysteine-rich venom protein VAR10 (Varanus varius (Lace monitor lizard)).